The chain runs to 162 residues: MKSRKFFSKLKEESYDVSIFDLMNAKVYLEKDMAYLPEDYKKGYLEDFFTFFPEVLKEIRNKTEEELEDFEIEEEEIRKVDLRLFSMGSKRTGRDSYEKLVKTVINYLIFINKRPLHALTTRFPGGKQIIEKNGNYYCPIKNAQSNELSICEFCICKDLNEL.

It belongs to the UPF0305 family.

The protein is UPF0305 protein MmarC5_0909 of Methanococcus maripaludis (strain C5 / ATCC BAA-1333).